Reading from the N-terminus, the 338-residue chain is Ketol-acid reductoisomerase (NADP(+)) (338 aa).

The 181-residue stretch at 1–181 (MKVFYDKDCD…GGGRTGIIET (181 aa)) folds into the KARI N-terminal Rossmann domain. NADP(+) contacts are provided by residues 24 to 27 (YGSQ), Arg-47, Ser-50, Thr-52, and 82 to 85 (DEFQ). Residue His-107 is part of the active site. Gly-133 lines the NADP(+) pocket. The KARI C-terminal knotted domain occupies 182–327 (TFKDETETDL…EQLRSMMPWI (146 aa)). Positions 190, 194, 226, and 230 each coordinate Mg(2+). Ser-251 serves as a coordination point for substrate.

It belongs to the ketol-acid reductoisomerase family. Mg(2+) serves as cofactor.

The enzyme catalyses (2R)-2,3-dihydroxy-3-methylbutanoate + NADP(+) = (2S)-2-acetolactate + NADPH + H(+). It carries out the reaction (2R,3R)-2,3-dihydroxy-3-methylpentanoate + NADP(+) = (S)-2-ethyl-2-hydroxy-3-oxobutanoate + NADPH + H(+). Its pathway is amino-acid biosynthesis; L-isoleucine biosynthesis; L-isoleucine from 2-oxobutanoate: step 2/4. It functions in the pathway amino-acid biosynthesis; L-valine biosynthesis; L-valine from pyruvate: step 2/4. Involved in the biosynthesis of branched-chain amino acids (BCAA). Catalyzes an alkyl-migration followed by a ketol-acid reduction of (S)-2-acetolactate (S2AL) to yield (R)-2,3-dihydroxy-isovalerate. In the isomerase reaction, S2AL is rearranged via a Mg-dependent methyl migration to produce 3-hydroxy-3-methyl-2-ketobutyrate (HMKB). In the reductase reaction, this 2-ketoacid undergoes a metal-dependent reduction by NADPH to yield (R)-2,3-dihydroxy-isovalerate. The sequence is that of Ketol-acid reductoisomerase (NADP(+)) from Pseudomonas putida (strain W619).